Reading from the N-terminus, the 387-residue chain is DNA double-strand break repair protein Mre11 (387 aa).

Mn(2+)-binding residues include Asp-9, His-11, Asp-50, and Asn-85. Catalysis depends on His-86, which acts as the Proton donor. His-150, Asp-181, and His-183 together coordinate Mn(2+). Positions 365 to 387 (AVLDDDADAADDDGRPTTVEEFQ) are disordered. Over residues 366–375 (VLDDDADAAD) the composition is skewed to acidic residues.

The protein belongs to the MRE11/RAD32 family. Homodimer. Forms a heterotetramer composed of two Mre11 subunits and two Rad50 subunits. Mn(2+) is required as a cofactor.

Its activity is regulated as follows. Nuclease activity is regulated by Rad50. Functionally, part of the Rad50/Mre11 complex, which is involved in the early steps of DNA double-strand break (DSB) repair. Mre11 binds to DSB ends and has both double-stranded 3'-5' exonuclease activity and single-stranded endonuclease activity. The polypeptide is DNA double-strand break repair protein Mre11 (Halobacterium salinarum (strain ATCC 700922 / JCM 11081 / NRC-1) (Halobacterium halobium)).